Reading from the N-terminus, the 348-residue chain is Major outer membrane protein P.IB (348 aa).

An N-terminal signal peptide occupies residues 1-19 (MKKSLIALTLAALPVAAMA).

This sequence belongs to the Gram-negative porin family. Homotrimer.

The protein resides in the cell outer membrane. Functionally, serves as a slightly cation selective porin. Major antigen on the gonococcal cell surface and it may have pathogenic properties in addition to its porin activity. This is Major outer membrane protein P.IB (porB) from Neisseria gonorrhoeae.